The sequence spans 206 residues: Macrophage immunometabolism regulator (206 aa).

An N-acetylmethionine modification is found at methionine 1. Positions 1 to 41 are disordered; sequence MEVDINGESRSTLTTLPFPGAEANSPGKAEAEKPRCSSTPC. A phosphoserine mark is found at serine 25, serine 140, and serine 167.

Belongs to the UNC119-binding protein family. In terms of assembly, interacts with UNC119 and UNC119B; interaction preferentially takes place when UNC119 and UNC119B are unliganded with myristoylated proteins.

It is found in the cytoplasm. The protein localises to the cell projection. It localises to the cilium. Regulates the macrophage function, by enhancing the resolution of inflammation and wound repair functions mediated by M2 macrophages. The regulation of macrophage function is, due at least in part, to its ability to inhibit glycolysis. May also play a role in trafficking of proteins via its interaction with UNC119 and UNC119B cargo adapters: may help the release of UNC119 and UNC119B cargo or the recycling of UNC119 and UNC119B. May play a role in ciliary membrane localization via its interaction with UNC119B and protein transport into photoreceptor cells. This is Macrophage immunometabolism regulator (MACIR) from Pongo abelii (Sumatran orangutan).